Reading from the N-terminus, the 313-residue chain is MRQTSVARLYEDQGPRLQLTHVSGPLDAVLSVAEERMWPADLVGHLNLIHPTRLQVLGAAELEWARRQSREKVAHHLNGILSARPPAIIVADGCETPNIVHGVCTAHNVALFSTPHPSASVIDQLRLYLSRQLAEKISLHGVFMDVLGIGVFITGNSGAGKSELALELISRGHGLVADDIVEFSRTAPTVLEGRCPELLKDFIEVRGLGILNIRTIFGETACRRKMRLRLVCHLERRQPGQDDPNRLPVQQEQQVILGVSTPRVTLPVAAGRNLAVLLEAAVRSTILQLRGVDSTQEFIDRQSRMLMGDGDGL.

Catalysis depends on residues histidine 140 and lysine 161. 155–162 (GNSGAGKS) provides a ligand contact to ATP. Serine 162 is a Mg(2+) binding site. The active-site Proton acceptor; for phosphorylation activity. Proton donor; for dephosphorylation activity is the aspartate 179. The interval 203–212 (IEVRGLGILN) is important for the catalytic mechanism of both phosphorylation and dephosphorylation. Glutamate 204 lines the Mg(2+) pocket. The active site involves arginine 246. The interval 267–272 (PVAAGR) is important for the catalytic mechanism of dephosphorylation.

The protein belongs to the HPrK/P family. Homohexamer. Mg(2+) is required as a cofactor.

It carries out the reaction [HPr protein]-L-serine + ATP = [HPr protein]-O-phospho-L-serine + ADP + H(+). It catalyses the reaction [HPr protein]-O-phospho-L-serine + phosphate + H(+) = [HPr protein]-L-serine + diphosphate. In terms of biological role, catalyzes the ATP- as well as the pyrophosphate-dependent phosphorylation of a specific serine residue in HPr, a phosphocarrier protein of the phosphoenolpyruvate-dependent sugar phosphotransferase system (PTS). HprK/P also catalyzes the pyrophosphate-producing, inorganic phosphate-dependent dephosphorylation (phosphorolysis) of seryl-phosphorylated HPr (P-Ser-HPr). The sequence is that of HPr kinase/phosphorylase from Azoarcus sp. (strain BH72).